A 306-amino-acid chain; its full sequence is Non-specific ribonucleoside hydrolase RihC (306 aa).

The active site involves His235.

The protein belongs to the IUNH family. RihC subfamily.

In terms of biological role, hydrolyzes both purine and pyrimidine ribonucleosides with a broad-substrate specificity. This chain is Non-specific ribonucleoside hydrolase RihC, found in Salmonella paratyphi B (strain ATCC BAA-1250 / SPB7).